The sequence spans 269 residues: UPF0354 protein YtpQ (269 aa).

It belongs to the UPF0354 family.

The chain is UPF0354 protein YtpQ (ytpQ) from Bacillus subtilis (strain 168).